A 227-amino-acid polypeptide reads, in one-letter code: Phosphoglycolate phosphatase (227 aa).

The active-site Nucleophile is D11. Positions 11 and 13 each coordinate Mg(2+). Substrate is bound at residue K155. Residues D178 and D182 each contribute to the Mg(2+) site.

This sequence belongs to the archaeal SPP-like hydrolase family. It depends on Mg(2+) as a cofactor.

The enzyme catalyses 2-phosphoglycolate + H2O = glycolate + phosphate. In terms of biological role, catalyzes the dephosphorylation of 2-phosphoglycolate. This Haloarcula marismortui (strain ATCC 43049 / DSM 3752 / JCM 8966 / VKM B-1809) (Halobacterium marismortui) protein is Phosphoglycolate phosphatase.